Here is a 336-residue protein sequence, read N- to C-terminus: dTDP-glucose 4,6-dehydratase (336 aa).

Residues 7–13 (GGAGFIG), 37–40 (DKLT), and 63–64 (DI) each bind NAD(+). Thr87 lines the substrate pocket. Thr102 contributes to the NAD(+) binding site. Residue 127-129 (TDE) coordinates substrate. The active-site Proton donor is Asp128. Active-site proton acceptor residues include Glu129 and Tyr151. 151-155 (YAAAK) contributes to the NAD(+) binding site. Asn180 lines the substrate pocket. Asn181 is a binding site for NAD(+). Substrate is bound by residues 190-191 (KL), 206-208 (PVY), Arg215, Asn250, and 274-277 (RPGH).

Belongs to the NAD(P)-dependent epimerase/dehydratase family. dTDP-glucose dehydratase subfamily. Homodimer. NAD(+) serves as cofactor.

It carries out the reaction dTDP-alpha-D-glucose = dTDP-4-dehydro-6-deoxy-alpha-D-glucose + H2O. It functions in the pathway antibiotic biosynthesis; novobiocin biosynthesis. Its function is as follows. dTDP-glucose 4,6-dehydratase involved in the generation of the deoxysugar in the novobiocin biosynthesis pathway, an aminocoumarin family antibiotic that targets bacterial DNA gyrases. This chain is dTDP-glucose 4,6-dehydratase (novT), found in Streptomyces niveus (Streptomyces spheroides).